The primary structure comprises 319 residues: Acetyl esterase (319 aa).

Positions 91-93 (HGG) match the Involved in the stabilization of the negatively charged intermediate by the formation of the oxyanion hole motif. Residues serine 165, aspartate 262, and histidine 292 contribute to the active site.

This sequence belongs to the 'GDXG' lipolytic enzyme family. As to quaternary structure, homodimer. Interacts with MalT and MelA.

It localises to the cytoplasm. Its function is as follows. Displays esterase activity towards short chain fatty esters (acyl chain length of up to 8 carbons). Able to hydrolyze triacetylglycerol (triacetin) and tributyrylglycerol (tributyrin), but not trioleylglycerol (triolein) or cholesterol oleate. Negatively regulates MalT activity by antagonizing maltotriose binding. Inhibits MelA galactosidase activity. In Escherichia coli O45:K1 (strain S88 / ExPEC), this protein is Acetyl esterase.